The primary structure comprises 323 residues: Pantothenate kinase (323 aa).

101–108 (GSVAVGKS) is an ATP binding site.

It belongs to the prokaryotic pantothenate kinase family.

The protein resides in the cytoplasm. It catalyses the reaction (R)-pantothenate + ATP = (R)-4'-phosphopantothenate + ADP + H(+). It participates in cofactor biosynthesis; coenzyme A biosynthesis; CoA from (R)-pantothenate: step 1/5. The polypeptide is Pantothenate kinase (Xanthobacter autotrophicus (strain ATCC BAA-1158 / Py2)).